The primary structure comprises 425 residues: Serine--tRNA ligase (425 aa).

L-serine is bound at residue 233–235 (TAE). 264–266 (RAE) contributes to the ATP binding site. Glutamate 287 is a binding site for L-serine. 351-354 (EISS) contributes to the ATP binding site. Serine 387 is a binding site for L-serine.

The protein belongs to the class-II aminoacyl-tRNA synthetase family. Type-1 seryl-tRNA synthetase subfamily. Homodimer. The tRNA molecule binds across the dimer.

The protein localises to the cytoplasm. The catalysed reaction is tRNA(Ser) + L-serine + ATP = L-seryl-tRNA(Ser) + AMP + diphosphate + H(+). The enzyme catalyses tRNA(Sec) + L-serine + ATP = L-seryl-tRNA(Sec) + AMP + diphosphate + H(+). It functions in the pathway aminoacyl-tRNA biosynthesis; selenocysteinyl-tRNA(Sec) biosynthesis; L-seryl-tRNA(Sec) from L-serine and tRNA(Sec): step 1/1. Functionally, catalyzes the attachment of serine to tRNA(Ser). Is also able to aminoacylate tRNA(Sec) with serine, to form the misacylated tRNA L-seryl-tRNA(Sec), which will be further converted into selenocysteinyl-tRNA(Sec). The chain is Serine--tRNA ligase from Clostridium perfringens (strain 13 / Type A).